The chain runs to 52 residues: Rubredoxin (52 aa).

Residues 1–51 form the Rubredoxin-like domain; the sequence is MDKYECSICGYIYDEAEGDDGNVAAGTKFADLPADWVCPTCGADKDAFVKM. Residues Cys-6, Cys-9, Cys-38, and Cys-41 each coordinate Fe cation.

It belongs to the rubredoxin family. It depends on Fe(3+) as a cofactor.

Rubredoxin is a small nonheme, iron protein lacking acid-labile sulfide. Its single Fe, chelated to 4 Cys, functions as an electron acceptor and may also stabilize the conformation of the molecule. In Megasphaera elsdenii, this protein is Rubredoxin.